A 163-amino-acid polypeptide reads, in one-letter code: Nucleotide-binding protein LA_3406 (163 aa).

It belongs to the YajQ family.

Nucleotide-binding protein. This is Nucleotide-binding protein LA_3406 from Leptospira interrogans serogroup Icterohaemorrhagiae serovar Lai (strain 56601).